Here is a 356-residue protein sequence, read N- to C-terminus: Septin-2A (356 aa).

The Septin-type G domain occupies 33–305 (KGFEFTLMVV…ENFRSERLKK (273 aa)). The tract at residues 43-50 (GESGLGKS) is G1 motif. GTP-binding positions include 43–50 (GESGLGKS), threonine 77, glycine 103, 182–190 (KADTLTLRE), glycine 240, and arginine 255. The G3 motif stretch occupies residues 100-103 (DTPG). The tract at residues 181 to 184 (AKAD) is G4 motif. The important for dimerization stretch occupies residues 259–269 (WGVVEVENTEH).

The protein belongs to the TRAFAC class TrmE-Era-EngA-EngB-Septin-like GTPase superfamily. Septin GTPase family. In terms of assembly, septins polymerize into heterooligomeric protein complexes that form filaments, and associate with cellular membranes, actin filaments and microtubules. GTPase activity is required for filament formation. Can form heterooligomers with other family members and form filaments. Interacts with wdpcp.

Its subcellular location is the cytoplasm. It is found in the cytoskeleton. It localises to the spindle. The protein resides in the cleavage furrow. The protein localises to the midbody. Its subcellular location is the cell projection. It is found in the cilium membrane. In terms of biological role, filament-forming cytoskeletal GTPase. Required for normal organization of the actin cytoskeleton. Plays a role in the biogenesis of polarized columnar-shaped epithelium. Required for the progression through mitosis through regulation of chromosome congression. During anaphase, may be required for chromosome segregation and spindle elongation. Probably plays a role in ciliogenesis and collective cell movements including convergent extension during gastrulation. In cilia, required for the integrity of the diffusion barrier at the base of the primary cilium that prevents diffusion of transmembrane proteins between the cilia and plasma membranes. Controls cell shape and not polarization of cells during convergent extension. This chain is Septin-2A (sept2-a), found in Xenopus laevis (African clawed frog).